Here is a 310-residue protein sequence, read N- to C-terminus: TLC domain-containing protein 2 (310 aa).

The next 6 helical transmembrane spans lie at 6 to 26 (LLVA…LQLL), 40 to 60 (NIFV…VGLW), 79 to 99 (VLVA…LWNQ), 117 to 137 (CLST…SLLL), 167 to 187 (ASLA…SLWL), and 194 to 214 (LSLA…SISI). Residues 33-227 (RDRWMWRNIF…IRILTKDILQ (195 aa)) form the TLC domain.

Belongs to the TLCD family.

It localises to the cell membrane. In terms of biological role, regulates the composition and fluidity of the plasma membrane. Inhibits the incorporation of membrane-fluidizing phospholipids containing omega-3 long-chain polyunsaturated fatty acids (LCPUFA) and thereby promotes membrane rigidity. Does not appear to have any effect on LCPUFA synthesis. The chain is TLC domain-containing protein 2 (Tlcd2) from Mus musculus (Mouse).